An 84-amino-acid chain; its full sequence is MALSSQIWAACLLLLLLLASLTSGSVFPQQTGQLAELQPQDRAGARAGWTPMLQRRRRRDTHFPIYIFCCGCCHRSKCGMCCKT.

The first 24 residues, 1 to 24, serve as a signal peptide directing secretion; the sequence is MALSSQIWAACLLLLLLLASLTSG. A propeptide spanning residues 25–54 is cleaved from the precursor; it reads SVFPQQTGQLAELQPQDRAGARAGWTPMLQ. 3 cysteine pairs are disulfide-bonded: Cys69/Cys72, Cys70/Cys78, and Cys73/Cys81.

Belongs to the hepcidin family. As to quaternary structure, interacts with SLC40A1; this interaction promotes SLC40A1 rapid ubiquitination.

The protein localises to the secreted. In terms of biological role, liver-produced hormone that constitutes the main circulating regulator of iron absorption and distribution across tissues. Acts by promoting endocytosis and degradation of ferroportin/SLC40A1, leading to the retention of iron in iron-exporting cells and decreased flow of iron into plasma. Controls the major flows of iron into plasma: absorption of dietary iron in the intestine, recycling of iron by macrophages, which phagocytose old erythrocytes and other cells, and mobilization of stored iron from hepatocytes. Its function is as follows. Has strong antimicrobial activity against E.coli ML35P N.cinerea and weaker against S.epidermidis, S.aureus and group b streptococcus bacteria. Active against the fungus C.albicans. No activity against P.aeruginosa. The sequence is that of Hepcidin (HAMP) from Pongo abelii (Sumatran orangutan).